Here is a 404-residue protein sequence, read N- to C-terminus: Probable tRNA sulfurtransferase (404 aa).

The region spanning 60–165 (QPIVEALKLV…DEAAYISYEE (106 aa)) is the THUMP domain. ATP-binding positions include 183-184 (ML), 208-209 (HF), arginine 265, glycine 287, and glutamine 296.

The protein belongs to the ThiI family.

The protein localises to the cytoplasm. It carries out the reaction [ThiI sulfur-carrier protein]-S-sulfanyl-L-cysteine + a uridine in tRNA + 2 reduced [2Fe-2S]-[ferredoxin] + ATP + H(+) = [ThiI sulfur-carrier protein]-L-cysteine + a 4-thiouridine in tRNA + 2 oxidized [2Fe-2S]-[ferredoxin] + AMP + diphosphate. The catalysed reaction is [ThiS sulfur-carrier protein]-C-terminal Gly-Gly-AMP + S-sulfanyl-L-cysteinyl-[cysteine desulfurase] + AH2 = [ThiS sulfur-carrier protein]-C-terminal-Gly-aminoethanethioate + L-cysteinyl-[cysteine desulfurase] + A + AMP + 2 H(+). The protein operates within cofactor biosynthesis; thiamine diphosphate biosynthesis. Its function is as follows. Catalyzes the ATP-dependent transfer of a sulfur to tRNA to produce 4-thiouridine in position 8 of tRNAs, which functions as a near-UV photosensor. Also catalyzes the transfer of sulfur to the sulfur carrier protein ThiS, forming ThiS-thiocarboxylate. This is a step in the synthesis of thiazole, in the thiamine biosynthesis pathway. The sulfur is donated as persulfide by IscS. This Streptococcus pyogenes serotype M49 (strain NZ131) protein is Probable tRNA sulfurtransferase.